A 54-amino-acid polypeptide reads, in one-letter code: Ovomucoid (54 aa).

The Kazal-like domain occupies 4 to 54 (VDCSDYPKPVCSLEDMPLCGSDSKTYSNKCNFCNAVVDSNGTLTLSHFGKC). Disulfide bonds link C6-C36, C14-C33, and C22-C54. N43 carries an N-linked (GlcNAc...) asparagine glycan.

The protein localises to the secreted. The sequence is that of Ovomucoid from Vultur gryphus (Andean condor).